A 304-amino-acid chain; its full sequence is Phytol kinase 1, chloroplastic (304 aa).

The transit peptide at 1 to 59 (MAATLPLSPINHQLCRFGNNSLTTHRFCSPGFLISSPCFIGLTGMGSATQLRARRSLIS) directs the protein to the chloroplast. The next 6 helical transmembrane spans lie at 71–91 (VGAT…FESL), 105–125 (LVHI…SGST), 129–149 (YFAA…GLSI), 167–187 (ELLK…VFFW), 191–211 (PIGM…DIMG), and 227–247 (WAGS…LLYY).

Belongs to the polyprenol kinase family.

The protein localises to the plastid. Its subcellular location is the chloroplast membrane. It catalyses the reaction phytol + CTP = phytyl phosphate + CDP + H(+). It functions in the pathway cofactor biosynthesis; tocopherol biosynthesis. Kinase involved in the activation and reutilization of phytol from chlorophyll degradation in plant metabolism, including tocopherol biosynthesis. Catalyzes the conversion of phytol to phytol monophosphate (PMP) in the presence of CTP or UTP. No activity with ATP or GTP as phosphoryl donor. The polypeptide is Phytol kinase 1, chloroplastic (Arabidopsis thaliana (Mouse-ear cress)).